The primary structure comprises 297 residues: Probable endonuclease 4 (297 aa).

Residues His-69, His-110, Glu-145, Asp-179, His-182, His-214, Asp-227, His-229, and Glu-259 each contribute to the Zn(2+) site.

This sequence belongs to the AP endonuclease 2 family. The cofactor is Zn(2+).

The catalysed reaction is Endonucleolytic cleavage to 5'-phosphooligonucleotide end-products.. Functionally, endonuclease IV plays a role in DNA repair. It cleaves phosphodiester bonds at apurinic or apyrimidinic (AP) sites, generating a 3'-hydroxyl group and a 5'-terminal sugar phosphate. This Bacillus subtilis (strain 168) protein is Probable endonuclease 4.